A 488-amino-acid polypeptide reads, in one-letter code: Palmitoleoyl-protein carboxylesterase notum1 (488 aa).

The first 20 residues, 1 to 20 (MAGALCVTLLLLLSTNTVSG), serve as a signal peptide directing secretion. N-linked (GlcNAc...) asparagine glycosylation is present at Asn-90. Catalysis depends on charge relay system residues Ser-226, Asp-334, and His-383.

This sequence belongs to the pectinacetylesterase family. Notum subfamily. In terms of tissue distribution, expressed in the egg and through cleavage to gastrulation stages. Enriched in the animal (prospective ectoderm) and dorsal regions in early gastrula. Shows a dynamic expression during embryogenesis, in particular during neural induction and antero-posterior (AP) patterning.

It is found in the secreted. The enzyme catalyses [Wnt protein]-O-(9Z)-hexadecenoyl-L-serine + H2O = [Wnt protein]-L-serine + (9Z)-hexadecenoate + H(+). Functionally, carboxylesterase that acts as a key negative regulator of the Wnt signaling pathway by specifically mediating depalmitoleoylation of WNT proteins. Serine palmitoleoylation of WNT proteins is required for efficient binding to frizzled receptors. Functions in the prospective ectoderm and is required for neural induction. This is Palmitoleoyl-protein carboxylesterase notum1 from Xenopus laevis (African clawed frog).